The sequence spans 371 residues: Gustatory and pheromone receptor 39a, isoform A (371 aa).

The Cytoplasmic segment spans residues 1-41 (MSKVCRDLRIYLRLLHIMGMMCWHFDSDHCQLVATSGSERY). The chain crosses the membrane as a helical span at residues 42–62 (AVVYAGCILVSTTAGFIFALL). Over 63 to 80 (HPSRFHIAIYNQTGNFYE) the chain is Extracellular. Residue Asn73 is glycosylated (N-linked (GlcNAc...) asparagine). Residues 81–101 (AVIFRSTCVVLFLVYVILYAW) traverse the membrane as a helical segment. The Cytoplasmic portion of the chain corresponds to 102-127 (RHRYRDLVQHILRLNRRCASSCTNQQ). A helical transmembrane segment spans residues 128–148 (FLHNIILYGMLTILCFGNYLH). Residues 149-161 (GYTRAGLATLPLA) lie on the Extracellular side of the membrane. Residues 162–182 (LCMLVYIFAFLVLCLLLMFFV) form a helical membrane-spanning segment. Over 183-228 (SLKQVMTAGLIHYNQQLCQGDLISGLRGRQQILKLCGGELNECFGL) the chain is Cytoplasmic. A helical transmembrane segment spans residues 229 to 249 (LMLPIVALVLLMAPSGPFFLI). At 250–263 (STVLEGKFRPDECL) the chain is on the extracellular side. The helical transmembrane segment at 264-284 (IMLLTSSTWDTPWMIMLVLML) threads the bilayer. The Cytoplasmic portion of the chain corresponds to 285-340 (RTNGISEEANKTAKMLTKVPRTGTGLDRMIEKFLLKNLRQKPILTAYGFFALDKST). A helical transmembrane segment spans residues 341–361 (LFKLFTAIFTYMVILVQFKEM). Residues 362–371 (ENSTKSINKF) lie on the Extracellular side of the membrane. Asn363 carries N-linked (GlcNAc...) asparagine glycosylation.

Belongs to the insect chemoreceptor superfamily. Gustatory receptor (GR) family. Gr21a subfamily. Expressed in the adult labellar chemosensory neurons, and adult thorax and wing. In larvae, is expressed in neurons of the posterior pharyngeal sense organ.

Its subcellular location is the cell membrane. Functionally, gustatory receptor which mediates acceptance or avoidance behavior, depending on its substrates. Plays a role in sustaining courtship behavior in males, possibly through the reception of a stimulating arrestant pheromone. This Drosophila melanogaster (Fruit fly) protein is Gustatory and pheromone receptor 39a, isoform A (Gr39a).